The sequence spans 343 residues: Heat-inducible transcription repressor HrcA (343 aa).

This sequence belongs to the HrcA family.

Its function is as follows. Negative regulator of class I heat shock genes (grpE-dnaK-dnaJ and groELS operons). Prevents heat-shock induction of these operons. This is Heat-inducible transcription repressor HrcA from Alkaliphilus metalliredigens (strain QYMF).